The chain runs to 687 residues: Glycine--tRNA ligase beta subunit (687 aa).

The protein belongs to the class-II aminoacyl-tRNA synthetase family. Tetramer of two alpha and two beta subunits.

The protein localises to the cytoplasm. It carries out the reaction tRNA(Gly) + glycine + ATP = glycyl-tRNA(Gly) + AMP + diphosphate. The protein is Glycine--tRNA ligase beta subunit of Neisseria meningitidis serogroup B (strain ATCC BAA-335 / MC58).